We begin with the raw amino-acid sequence, 185 residues long: Virulence membrane protein PagC (185 aa).

A signal peptide spans 1-23; it reads MKNIILSTLVITTSVLVVNVAQA.

It belongs to the outer membrane OOP (TC 1.B.6) superfamily. Ail family.

It is found in the cell outer membrane. Its function is as follows. Essential for full virulence and survival within macrophages. The protein is Virulence membrane protein PagC (pagC) of Salmonella typhimurium (strain LT2 / SGSC1412 / ATCC 700720).